Reading from the N-terminus, the 1468-residue chain is DNA polymerase alpha catalytic subunit A (1468 aa).

Over residues 1–12 the composition is skewed to basic and acidic residues; it reads MSSKSEKLEKLR. Disordered stretches follow at residues 1–34, 71–135, and 166–205; these read MSSKSEKLEKLRKLQAARNGTSIDDYEGDESDGD, GVEE…KKSI, and NLNSSPTSEFKSSIKRVNGNDESSHDAGISKKVKIDPDSS. The residue at position 2 (Ser-2) is an N-acetylserine. Ser-31 is modified (phosphoserine). Over residues 71–80 the composition is skewed to basic and acidic residues; sequence GVEEDWREVD. Phosphoserine occurs at positions 82, 83, 84, 169, and 170. A compositionally biased stretch (polar residues) spans 166-176; it reads NLNSSPTSEFK. A Phosphothreonine modification is found at Thr-172. Positions 183 to 205 are enriched in basic and acidic residues; it reads NGNDESSHDAGISKKVKIDPDSS. A phosphoserine mark is found at Ser-240 and Ser-274. The disordered stretch occupies residues 256–275; it reads LANPPSAQSLADEEDDEDSD. A compositionally biased stretch (acidic residues) spans 266–275; the sequence is ADEEDDEDSD. Thr-309 and Thr-313 each carry phosphothreonine. The tract at residues 813 to 837 is disordered; sequence PDKEGNRSRAQKQRQNEENADAPVN. The interval 1246 to 1381 is DNA-binding; sequence KKYFRREGGN…CTGVMRYKYS (136 aa). Zn(2+)-binding residues include Cys-1287, Cys-1290, Cys-1314, Cys-1317, Cys-1348, Cys-1353, Cys-1367, and Cys-1372. The CysA-type zinc-finger motif lies at 1287–1317; sequence CPSCDKRFPFGGIVSSNYYRVSYNGLQCKHC. The short motif at 1348 to 1372 is the CysB motif element; that stretch reads CDDSTCGIVTRQVSVFGKRCLNDGC.

Belongs to the DNA polymerase type-B family. In terms of assembly, DNA polymerase alpha:primase is a four subunit enzyme complex, which is assembled throughout the cell cycle, and consists of the two DNA polymerase subunits A POL1 and B POL12, and the DNA primase large PRI2 and small PRI1 subunits. Subunit B POL12 binds to subunit A POL1. POL1 interacts with CDC13, POB3, SPT16 and MCM10.

The protein localises to the nucleus. The catalysed reaction is DNA(n) + a 2'-deoxyribonucleoside 5'-triphosphate = DNA(n+1) + diphosphate. Its function is as follows. Catalytic component of DNA polymerase alpha, which in complex with DNA primase (DNA polymerase alpha:primase) constitutes a replicative polymerase. POL1 has a role in promoting telomere replication during interaction with CDC13. The sequence is that of DNA polymerase alpha catalytic subunit A (POL1) from Saccharomyces cerevisiae (strain ATCC 204508 / S288c) (Baker's yeast).